A 130-amino-acid chain; its full sequence is Mating-type-like protein A1 (130 aa).

The homeobox DNA-binding region spans 68–127 (TYTTRKPLPAKAKLQLVETFSKKRYLTRCEKHQLAVQCGITTNQVQIWFANRRKRSKDLN).

Belongs to the MATA1 family.

The protein resides in the nucleus. In terms of biological role, mating type proteins are sequence specific DNA-binding proteins that act as master switches in yeast differentiation by controlling gene expression in a cell type-specific fashion. This Candida glabrata (strain ATCC 2001 / BCRC 20586 / JCM 3761 / NBRC 0622 / NRRL Y-65 / CBS 138) (Yeast) protein is Mating-type-like protein A1 (MTL1A1).